The chain runs to 131 residues: Holo-[acyl-carrier-protein] synthase (131 aa).

Residues D8 and E57 each contribute to the Mg(2+) site.

Belongs to the P-Pant transferase superfamily. AcpS family. Mg(2+) is required as a cofactor.

The protein localises to the cytoplasm. It catalyses the reaction apo-[ACP] + CoA = holo-[ACP] + adenosine 3',5'-bisphosphate + H(+). Transfers the 4'-phosphopantetheine moiety from coenzyme A to a Ser of acyl-carrier-protein. In Thiobacillus denitrificans (strain ATCC 25259 / T1), this protein is Holo-[acyl-carrier-protein] synthase.